A 254-amino-acid chain; its full sequence is Ribose-5-phosphate isomerase A (254 aa).

Residues 45-48, 105-108, and 118-121 each bind substrate; these read TGST, DGAD, and KGGG. The active-site Proton acceptor is the E127. K145 contacts substrate.

It belongs to the ribose 5-phosphate isomerase family. Homodimer.

It catalyses the reaction aldehydo-D-ribose 5-phosphate = D-ribulose 5-phosphate. Its pathway is carbohydrate degradation; pentose phosphate pathway; D-ribose 5-phosphate from D-ribulose 5-phosphate (non-oxidative stage): step 1/1. Functionally, catalyzes the reversible conversion of ribose-5-phosphate to ribulose 5-phosphate. The chain is Ribose-5-phosphate isomerase A from Treponema pallidum subsp. pallidum (strain SS14).